The primary structure comprises 134 residues: DNA-binding protein inhibitor ID-2 (134 aa).

A phosphoserine mark is found at Ser14 and Ser25. The bHLH domain maps to 23–75 (SRSKTPVDDPMSLLYNMNDCYSKLKELVPSIPQNKKVTKMEILQHVIDYILDL). The interval 30-83 (DDPMSLLYNMNDCYSKLKELVPSIPQNKKVTKMEILQHVIDYILDLQIALDSHP) is interaction with IFI204. Residues 106–115 (LNTDISILSL) carry the Nuclear export signal motif.

As to quaternary structure, interacts with GATA4 and NKX2-5. Interacts with NR0B2. Interacts with CLOCK and BMAL1. Interacts with IFI204. Interacts with NEDD9/HEF1. Interacts with ASB4; this interaction promotes ID2 proteasomal degradation. In terms of processing, polyubiquitinated; which is favored by Ifi204 and leads to proteasomal degradation. Ubiquitinated in a ASB4-depedent manner, leading to proteasomal degradation. Post-translationally, phosphorylated in vitro by CDK1, PKA and PKC.

The protein localises to the cytoplasm. It is found in the nucleus. In terms of biological role, transcriptional regulator (lacking a basic DNA binding domain) which negatively regulates the basic helix-loop-helix (bHLH) transcription factors by forming heterodimers and inhibiting their DNA binding and transcriptional activity. Implicated in regulating a variety of cellular processes, including cellular growth, senescence, differentiation, apoptosis, angiogenesis, and neoplastic transformation. Inhibits skeletal muscle and cardiac myocyte differentiation. Regulates the circadian clock by repressing the transcriptional activator activity of the CLOCK-BMAL1 heterodimer. Restricts the CLOCK and BMAL1 localization to the cytoplasm. Plays a role in both the input and output pathways of the circadian clock: in the input component, is involved in modulating the magnitude of photic entrainment and in the output component, contributes to the regulation of a variety of liver clock-controlled genes involved in lipid metabolism. This Mus musculus (Mouse) protein is DNA-binding protein inhibitor ID-2 (Id2).